The chain runs to 816 residues: Endo-acting ulvan lyase (816 aa).

Residues 1 to 23 form the signal peptide; the sequence is MGTSVRRISVVLMMLFGTNFCWS.

It belongs to the polysaccharide lyase family.

The protein resides in the cell surface. It is found in the periplasm. In terms of biological role, ulvan lyase involved in ulvan degradation. Ulvan is the main polysaccharide component of the Ulvales (green seaweed) cell wall. It is composed of disaccharide building blocks comprising 3-sulfated rhamnose (Rha3S) linked to D-glucuronic acid (GlcA), L-iduronic acid (IduA), or D-xylose (Xyl). Ulvan lyase catalyzes the endolytic cleavage of the glycosidic bond between Rha3S and the uronic acids GlcA or IduA, producing oligosaccharides that have unsaturated 4-deoxy-L-threo-hex-4-enopyranosiduronic acid (deltaUA) at the non-reducing end. This results eventually in the degradation of the ulvan polysaccharide into deltaUA-Rha3S disaccharides and deltaUA-Rha3S-Xyl-Rha3S tetrasaccharides. This Formosa agariphila (strain DSM 15362 / KCTC 12365 / LMG 23005 / KMM 3901 / M-2Alg 35-1) protein is Endo-acting ulvan lyase.